We begin with the raw amino-acid sequence, 150 residues long: Small ribosomal subunit protein eS19 (150 aa).

Belongs to the eukaryotic ribosomal protein eS19 family. In terms of assembly, part of the 30S ribosomal subunit.

Functionally, may be involved in maturation of the 30S ribosomal subunit. The protein is Small ribosomal subunit protein eS19 of Thermococcus kodakarensis (strain ATCC BAA-918 / JCM 12380 / KOD1) (Pyrococcus kodakaraensis (strain KOD1)).